The chain runs to 435 residues: Amino acid transporter AVT6C (435 aa).

A disordered region spans residues 1–24 (MTPQIKTHLLPKQEPSSSENHGSS). Transmembrane regions (helical) follow at residues 28–48 (IVFN…PAAF), 53–73 (IVPA…SVGF), 100–120 (IAVQ…FSII), 148–168 (WNTR…PLVL), 181–201 (VSFL…ISAL), 219–239 (GSFW…TFHF), 260–280 (ISVI…YLLF), 307–327 (IVRL…NFSL), 354–374 (LALL…WYFF), 375–395 (QFMG…AIVL), and 408–428 (IVAA…ISTN).

The protein belongs to the amino acid/polyamine transporter 2 family. Amino acid/auxin permease (AAAP) (TC 2.A.18.6) subfamily.

The protein resides in the membrane. This chain is Amino acid transporter AVT6C, found in Arabidopsis thaliana (Mouse-ear cress).